Consider the following 669-residue polypeptide: MSNPQKALNDFLSSESVHTHDSSRKQSNKQSSDEGRSSSQPSHHHSGGTNNNNNNNNNNNNSNNNNNGNDGGNDDDYDYEMQDYRPSPQSARPTPTYVPQYSVESGTAFPIQEVIPSAYINTQDINHKDNGPPSASSNRAFRPRGQTTVSANVLNIEDFYKNADDAHTIPESHLSRRRSRSRATSNAGHSANTGATNGRTTGAQTNMESNESPRNVPIMVKPKTLYQNPQTPTVLPSTYHPINKWSSVKNTYLKEFLAEFMGTMVMIIFGSAVVCQVNVAGKIQQDNFNVALDNLNVTGSSAETIDAMKSLTSLVSSVAGGTFDDVALGWAAAVVMGYFCAGGSAISGAHLNPSITLANLVYRGFPLKKVPYYFAGQLIGAFTGALILFIWYKRVLQEAYSDWWMNESVAGMFCVFPKPYLSSGRQFFSEFLCGAMLQAGTFALTDPYTCLSSDVFPLMMFILIFIINASMAYQTGTAMNLARDLGPRLALYAVGFDHKMLWVHHHHFFWVPMVGPFIGALMGGLVYDVCIYQGHESPVNWSLPVYKEMIMRAWFRRPGWKKRNRARRTSDLSDFSYNNDDDEEFGERMALQKTKTKSSISDNENEAGEKKVQFKSVQRGKRTFGGIPTILEEEDSIETASLGATTTDSIGLSDTSSEDSHYGNAKKVT.

Positions 1-16 (MSNPQKALNDFLSSES) are enriched in polar residues. Disordered regions lie at residues 1–99 (MSNP…TYVP) and 123–147 (QDIN…RGQT). Topologically, residues 1–254 (MSNPQKALND…WSSVKNTYLK (254 aa)) are extracellular. A compositionally biased stretch (low complexity) spans 50-68 (NNNNNNNNNNNNSNNNNNG). A compositionally biased stretch (acidic residues) spans 72–81 (GNDDDYDYEM). 2 stretches are compositionally biased toward polar residues: residues 87 to 99 (SPQS…TYVP) and 133 to 147 (PSAS…RGQT). Ser-150 bears the Phosphoserine mark. The tract at residues 167-215 (HTIPESHLSRRRSRSRATSNAGHSANTGATNGRTTGAQTNMESNESPRN) is disordered. Position 168 is a phosphothreonine (Thr-168). A compositionally biased stretch (low complexity) spans 191-206 (ANTGATNGRTTGAQTN). Ser-209 and Ser-212 each carry phosphoserine. The chain crosses the membrane as a helical span at residues 255–275 (EFLAEFMGTMVMIIFGSAVVC). The Cytoplasmic portion of the chain corresponds to 276 to 325 (QVNVAGKIQQDNFNVALDNLNVTGSSAETIDAMKSLTSLVSSVAGGTFDD). A helical membrane pass occupies residues 326 to 346 (VALGWAAAVVMGYFCAGGSAI). Residues 347-369 (SGAHLNPSITLANLVYRGFPLKK) lie on the Extracellular side of the membrane. The NPA 1 signature appears at 352 to 354 (NPS). The helical transmembrane segment at 370–390 (VPYYFAGQLIGAFTGALILFI) threads the bilayer. At 391–446 (WYKRVLQEAYSDWWMNESVAGMFCVFPKPYLSSGRQFFSEFLCGAMLQAGTFALTD) the chain is on the cytoplasmic side. The chain crosses the membrane as a helical span at residues 447-467 (PYTCLSSDVFPLMMFILIFII). Topologically, residues 468-506 (NASMAYQTGTAMNLARDLGPRLALYAVGFDHKMLWVHHH) are extracellular. An NPA 2 motif is present at residues 480–482 (NLA). A helical transmembrane segment spans residues 507 to 527 (HFFWVPMVGPFIGALMGGLVY). The Cytoplasmic portion of the chain corresponds to 528-669 (DVCIYQGHES…SHYGNAKKVT (142 aa)). 2 disordered regions span residues 591 to 615 (LQKT…VQFK) and 635 to 669 (DSIE…KKVT). The segment covering 638–655 (ETASLGATTTDSIGLSDT) has biased composition (polar residues).

This sequence belongs to the MIP/aquaporin (TC 1.A.8) family.

It is found in the membrane. In terms of biological role, channel protein for glycerol. Has a role in both glycerol influx and efflux. Plays a role in osmoregulation: under osmotic stress the channel is apparently closed to allow accumulation of glycerol in the cell under hyperosmotic conditions. This Saccharomyces cerevisiae (strain ATCC 204508 / S288c) (Baker's yeast) protein is Glycerol uptake/efflux facilitator protein (FPS1).